A 173-amino-acid chain; its full sequence is Small ribosomal subunit protein uS5 (173 aa).

In terms of domain architecture, S5 DRBM spans 18–81 (LREKMIAVNR…EQARRGMFKV (64 aa)).

The protein belongs to the universal ribosomal protein uS5 family. As to quaternary structure, part of the 30S ribosomal subunit. Contacts proteins S4 and S8.

Functionally, with S4 and S12 plays an important role in translational accuracy. In terms of biological role, located at the back of the 30S subunit body where it stabilizes the conformation of the head with respect to the body. The chain is Small ribosomal subunit protein uS5 from Bordetella avium (strain 197N).